The following is a 116-amino-acid chain: NADH-ubiquinone oxidoreductase chain 3 (116 aa).

3 consecutive transmembrane segments (helical) span residues 8–28, 56–76, and 88–108; these read VVAT…LPSL, FFLI…LLPL, and TLLW…YEWF.

It belongs to the complex I subunit 3 family.

The protein localises to the mitochondrion membrane. The catalysed reaction is a ubiquinone + NADH + 5 H(+)(in) = a ubiquinol + NAD(+) + 4 H(+)(out). Functionally, core subunit of the mitochondrial membrane respiratory chain NADH dehydrogenase (Complex I) that is believed to belong to the minimal assembly required for catalysis. Complex I functions in the transfer of electrons from NADH to the respiratory chain. The immediate electron acceptor for the enzyme is believed to be ubiquinone. The chain is NADH-ubiquinone oxidoreductase chain 3 (MT-ND3) from Scyliorhinus canicula (Small-spotted catshark).